Reading from the N-terminus, the 482-residue chain is Ras GTPase-activating protein-binding protein 2 (482 aa).

The region spanning 11-133 (VGREFVRQYY…FYVHNDMFRY (123 aa)) is the NTF2 domain. Acidic residues predominate over residues 140-158 (DSEPELDEESEDEVEEEQE). 2 disordered regions span residues 140–171 (DSEP…QENA) and 187–318 (EPLE…EQND). Residues serine 141, serine 149, and serine 225 each carry the phosphoserine modification. Positions 142-220 (EPELDEESED…PQVEEKNLEE (79 aa)) are acidic disordered region. Residues 191-225 (ESSHEPEPEPESETKTEELKPQVEEKNLEELEEKS) show a composition bias toward basic and acidic residues. A Phosphothreonine modification is found at threonine 227. Residue serine 235 is modified to Phosphoserine. Polar residues predominate over residues 247 to 264 (ASVTSKNLPPSGTVSSSG). Lysine 281 participates in a covalent cross-link: Glycyl lysine isopeptide (Lys-Gly) (interchain with G-Cter in SUMO2). A compositionally biased stretch (basic and acidic residues) spans 290–300 (RVREQRPRERP). The 79-residue stretch at 331 to 409 (HQLFVGNLPH…VRLNVEEKKT (79 aa)) folds into the RRM domain. Lysine 392 carries the post-translational modification N6-succinyllysine. The RG-rich region stretch occupies residues 404–476 (VEEKKTRAAR…GRGTGQMEGR (73 aa)). Over residues 408–432 (KTRAARERETRGGGDDRRDIRRNDR) the composition is skewed to basic and acidic residues. Residues 408–482 (KTRAARERET…MEGRFTGQRR (75 aa)) form a disordered region. Residues 433–445 (GPGGPRGIVGGGM) show a composition bias toward gly residues. Arginine 457 carries the omega-N-methylarginine modification. At serine 466 the chain carries Phosphoserine. Arginine 468 bears the Omega-N-methylarginine mark.

In terms of assembly, forms homooligomers. Forms heterodimers with G3BP1. Interacts with NFKBIA (via N-terminus). Interacts (via NTF2 domain) with USP10; inhibiting stress granule formation. Interacts (via NTF2 domain) with CAPRIN1; promoting stress granule formation. Associates (via RG-rich region) with 40S ribosome subunits. Interacts with PABPC1. As to quaternary structure, (Microbial infection) Interacts with non-structural protein 3 (via C-terminus) of Sindbis virus and Semliki forest virus; this interaction inhibits the formation of host stress granules on viral mRNAs and the nsp3-G3BP2 complexes bind viral RNAs and probably orchestrate the assembly of viral replication complexes. Post-translationally, (Microbial infection) Cleaved by foot-and-mouth disease virus leader protease; this cleavage suppresses the formation of cytoplasmic stress granules.

Its subcellular location is the cytoplasm. It localises to the stress granule. Under physiological conditions, G3BP2 adopts a compact state that is stabilized by intramolecular interactions between the RG-rich and the acidic regions that inhibit phase separation. Upon stress, polysomes disassemble and mRNAs are released in an unfolded protein-free state. Binding of unfolded mRNA to G3BP2 outcompetes the intramolecular interactions and RNA-bound G3BP2 adopts an expanded conformation in which the RG-rich region becomes exposed to engage in protein-protein and protein-RNA interactions, allowing physical cross-linking of RNA molecules to form protein-RNA condensates, leading to liquid-liquid phase separation (LLPS). In terms of biological role, scaffold protein that plays an essential role in cytoplasmic stress granule formation which acts as a platform for antiviral signaling. Plays an essential role in stress granule formation. Stress granules are membraneless compartments that store mRNAs and proteins, such as stalled translation pre-initiation complexes, in response to stress. Promotes formation of stress granules phase-separated membraneless compartment by undergoing liquid-liquid phase separation (LLPS) upon unfolded RNA-binding: functions as a molecular switch that triggers RNA-dependent LLPS in response to a rise in intracellular free RNA concentrations. The protein is Ras GTPase-activating protein-binding protein 2 of Homo sapiens (Human).